Here is a 226-residue protein sequence, read N- to C-terminus: Uracil-DNA glycosylase (226 aa).

The active-site Proton acceptor is aspartate 65.

Belongs to the uracil-DNA glycosylase (UDG) superfamily. UNG family.

Its subcellular location is the cytoplasm. It catalyses the reaction Hydrolyzes single-stranded DNA or mismatched double-stranded DNA and polynucleotides, releasing free uracil.. Its function is as follows. Excises uracil residues from the DNA which can arise as a result of misincorporation of dUMP residues by DNA polymerase or due to deamination of cytosine. This Bacillus pumilus (strain SAFR-032) protein is Uracil-DNA glycosylase.